Consider the following 323-residue polypeptide: Serine acetyltransferase 2 (323 aa).

Positions 302 to 323 (AQSNGPSLSAGDTEKGHTNSTS) are disordered. The segment covering 313-323 (DTEKGHTNSTS) has biased composition (basic and acidic residues).

It belongs to the transferase hexapeptide repeat family. As to quaternary structure, homomultimer. In terms of tissue distribution, ubiquitously expressed at low levels. Localized in vascular tissues, particularly in phloem.

The protein localises to the cytoplasm. It catalyses the reaction L-serine + acetyl-CoA = O-acetyl-L-serine + CoA. It participates in amino-acid biosynthesis; L-cysteine biosynthesis; L-cysteine from L-serine: step 1/2. In Arabidopsis thaliana (Mouse-ear cress), this protein is Serine acetyltransferase 2.